Reading from the N-terminus, the 223-residue chain is Deoxyribose-phosphate aldolase (223 aa).

The active-site Proton donor/acceptor is Asp-91. The Schiff-base intermediate with acetaldehyde role is filled by Lys-153. Catalysis depends on Lys-182, which acts as the Proton donor/acceptor.

The protein belongs to the DeoC/FbaB aldolase family. DeoC type 1 subfamily.

The protein localises to the cytoplasm. The enzyme catalyses 2-deoxy-D-ribose 5-phosphate = D-glyceraldehyde 3-phosphate + acetaldehyde. It participates in carbohydrate degradation; 2-deoxy-D-ribose 1-phosphate degradation; D-glyceraldehyde 3-phosphate and acetaldehyde from 2-deoxy-alpha-D-ribose 1-phosphate: step 2/2. Functionally, catalyzes a reversible aldol reaction between acetaldehyde and D-glyceraldehyde 3-phosphate to generate 2-deoxy-D-ribose 5-phosphate. In Yersinia enterocolitica serotype O:8 / biotype 1B (strain NCTC 13174 / 8081), this protein is Deoxyribose-phosphate aldolase.